The chain runs to 131 residues: Small ribosomal subunit protein uS8 (131 aa).

The protein belongs to the universal ribosomal protein uS8 family. Part of the 30S ribosomal subunit. Contacts proteins S5 and S12.

In terms of biological role, one of the primary rRNA binding proteins, it binds directly to 16S rRNA central domain where it helps coordinate assembly of the platform of the 30S subunit. In Campylobacter hominis (strain ATCC BAA-381 / DSM 21671 / CCUG 45161 / LMG 19568 / NCTC 13146 / CH001A), this protein is Small ribosomal subunit protein uS8.